The primary structure comprises 349 residues: Dihydroorotate dehydrogenase (quinone) (349 aa).

FMN contacts are provided by residues 67–71 and Thr91; that span reads AGLDK. Substrate is bound at residue Lys71. Position 116-120 (116-120) interacts with substrate; the sequence is NRLGF. FMN is bound by residues Asn147 and Asn180. Residue Asn180 participates in substrate binding. Residue Ser183 is the Nucleophile of the active site. Asn185 is a substrate binding site. Residues Lys225 and Thr253 each contribute to the FMN site. Position 254-255 (254-255) interacts with substrate; it reads NT. FMN contacts are provided by residues Gly276, Gly305, and 326–327; that span reads YT.

It belongs to the dihydroorotate dehydrogenase family. Type 2 subfamily. In terms of assembly, monomer. Requires FMN as cofactor.

The protein resides in the cell membrane. The enzyme catalyses (S)-dihydroorotate + a quinone = orotate + a quinol. It participates in pyrimidine metabolism; UMP biosynthesis via de novo pathway; orotate from (S)-dihydroorotate (quinone route): step 1/1. Catalyzes the conversion of dihydroorotate to orotate with quinone as electron acceptor. This is Dihydroorotate dehydrogenase (quinone) from Bordetella pertussis (strain Tohama I / ATCC BAA-589 / NCTC 13251).